The sequence spans 502 residues: Zinc finger protein 488 (502 aa).

The 123-residue stretch at 8–130 (RSLWTNDSKI…EGEELLVWYD (123 aa)) folds into the SET domain. Position 129 (Y129) interacts with S-adenosyl-L-methionine. The segment at 151–174 (YTCTRCGQAFKNENPFLAHCRFLC) adopts a C2H2-type 1; atypical zinc-finger fold. Disordered stretches follow at residues 267-303 (SEPT…KSSR) and 338-361 (PSKR…LDSF). The span at 269–286 (PTDNAQTNESKISKNSAF) shows a compositional bias: polar residues. 2 C2H2-type zinc fingers span residues 438–460 (NWCA…MRSH) and 479–501 (LTCP…MTSH).

The protein belongs to the krueppel C2H2-type zinc-finger protein family. Expressed in pMN progenitors and oligodendrocyte lineage cells in the embryo with expression declining in oligodendrocytes undergoing differentiation.

The protein resides in the nucleus. Functionally, transcriptional repressor. May have histone methyltransferase activity. Negatively regulates shh signaling activity in pMN progenitor cells which prevents their switch from motor neuron to oligodendrocyte precursor cell production. Independently of shh activity, also regulates oligodendrocyte formation. This is Zinc finger protein 488 from Danio rerio (Zebrafish).